A 274-amino-acid chain; its full sequence is Large ribosomal subunit protein uL2 (274 aa).

Disordered regions lie at residues 28-54 (KPYA…TRHI) and 221-274 (RGTA…RTKK). Positions 39–49 (KTGGRNNNGRI) are enriched in polar residues.

It belongs to the universal ribosomal protein uL2 family. In terms of assembly, part of the 50S ribosomal subunit. Forms a bridge to the 30S subunit in the 70S ribosome.

Its function is as follows. One of the primary rRNA binding proteins. Required for association of the 30S and 50S subunits to form the 70S ribosome, for tRNA binding and peptide bond formation. It has been suggested to have peptidyltransferase activity; this is somewhat controversial. Makes several contacts with the 16S rRNA in the 70S ribosome. The sequence is that of Large ribosomal subunit protein uL2 from Photorhabdus laumondii subsp. laumondii (strain DSM 15139 / CIP 105565 / TT01) (Photorhabdus luminescens subsp. laumondii).